Consider the following 570-residue polypeptide: Membrane protein insertase YidC (570 aa).

Polar residues predominate over residues 31 to 60 (QQPVAQTPSVTIDSNGADSSALLNSPNTGE). Residues 31–79 (QQPVAQTPSVTIDSNGADSSALLNSPNTGELDTPETASKPATAEDSNIS) are disordered. The next 5 helical transmembrane spans lie at 230–250 (PTFS…STPE), 378–398 (WGIA…HLSA), 444–464 (LGGC…YWVL), 487–507 (PYFV…SLNP), and 522–542 (PIIF…YWLV).

This sequence belongs to the OXA1/ALB3/YidC family. Type 1 subfamily. Interacts with the Sec translocase complex via SecD. Specifically interacts with transmembrane segments of nascent integral membrane proteins during membrane integration.

It localises to the cell inner membrane. Functionally, required for the insertion and/or proper folding and/or complex formation of integral membrane proteins into the membrane. Involved in integration of membrane proteins that insert both dependently and independently of the Sec translocase complex, as well as at least some lipoproteins. Aids folding of multispanning membrane proteins. This chain is Membrane protein insertase YidC, found in Hahella chejuensis (strain KCTC 2396).